Here is a 229-residue protein sequence, read N- to C-terminus: Potassium/proton antiporter CemA (229 aa).

4 helical membrane-spanning segments follow: residues 7–27 (FTPL…SFSF), 114–134 (IISF…LVVL), 154–174 (ILLL…ELMI), and 189–209 (IISG…KYWI).

The protein belongs to the CemA family.

Its subcellular location is the plastid. It is found in the chloroplast inner membrane. It carries out the reaction K(+)(in) + H(+)(out) = K(+)(out) + H(+)(in). Contributes to K(+)/H(+) antiport activity by supporting proton efflux to control proton extrusion and homeostasis in chloroplasts in a light-dependent manner to modulate photosynthesis. Prevents excessive induction of non-photochemical quenching (NPQ) under continuous-light conditions. Indirectly promotes efficient inorganic carbon uptake into chloroplasts. In Nandina domestica (Heavenly bamboo), this protein is Potassium/proton antiporter CemA.